We begin with the raw amino-acid sequence, 219 residues long: Flagellar L-ring protein (219 aa).

An N-terminal signal peptide occupies residues 1-14; it reads MKRLVLISLVLAAG. Cys15 carries N-palmitoyl cysteine lipidation. The S-diacylglycerol cysteine moiety is linked to residue Cys15.

This sequence belongs to the FlgH family. The basal body constitutes a major portion of the flagellar organelle and consists of four rings (L,P,S, and M) mounted on a central rod.

The protein localises to the cell outer membrane. It localises to the bacterial flagellum basal body. Its function is as follows. Assembles around the rod to form the L-ring and probably protects the motor/basal body from shearing forces during rotation. The protein is Flagellar L-ring protein of Dechloromonas aromatica (strain RCB).